We begin with the raw amino-acid sequence, 796 residues long: Protocadherin beta-3 (796 aa).

The N-terminal stretch at 1-26 is a signal peptide; the sequence is MEAGGERFLRQRQVLLLFVFLGGSLA. At 27 to 690 the chain is on the extracellular side; it reads GSESRRYSVA…AQADLLTVYL (664 aa). Cadherin domains are found at residues 35–133, 138–242, 247–347, 352–451, and 456–561; these read VAEE…SPVF, MHLK…APEF, YEVA…PPEL, VNSP…APAF, and YTLF…SPFV. N-linked (GlcNAc...) asparagine glycosylation occurs at Asn-169. Residues Asn-418 and Asn-436 are each glycosylated (N-linked (GlcNAc...) asparagine). Residue Asn-567 is glycosylated (N-linked (GlcNAc...) asparagine). The Cadherin 6 domain maps to 568-671; the sequence is GSAPCTELVP…LVDGFSQPYL (104 aa). Residues 691–711 traverse the membrane as a helical segment; the sequence is VVALASVSSLFLFSVLLFVAV. Topologically, residues 712-796 are cytoplasmic; sequence RLCRRSRAAS…PSFRKSFEFS (85 aa).

Its subcellular location is the cell membrane. Potential calcium-dependent cell-adhesion protein. May be involved in the establishment and maintenance of specific neuronal connections in the brain. This Homo sapiens (Human) protein is Protocadherin beta-3 (PCDHB3).